The following is a 365-amino-acid chain: Chorismate synthase (365 aa).

R46 serves as a coordination point for NADP(+). FMN is bound by residues 123 to 125, 241 to 242, G281, 296 to 300, and R322; these read RSS, NG, and KPTPS.

The protein belongs to the chorismate synthase family. As to quaternary structure, homotetramer. Requires FMNH2 as cofactor.

The enzyme catalyses 5-O-(1-carboxyvinyl)-3-phosphoshikimate = chorismate + phosphate. The protein operates within metabolic intermediate biosynthesis; chorismate biosynthesis; chorismate from D-erythrose 4-phosphate and phosphoenolpyruvate: step 7/7. In terms of biological role, catalyzes the anti-1,4-elimination of the C-3 phosphate and the C-6 proR hydrogen from 5-enolpyruvylshikimate-3-phosphate (EPSP) to yield chorismate, which is the branch point compound that serves as the starting substrate for the three terminal pathways of aromatic amino acid biosynthesis. This reaction introduces a second double bond into the aromatic ring system. This is Chorismate synthase from Helicobacter pylori (strain Shi470).